Here is a 281-residue protein sequence, read N- to C-terminus: Endochitinase At2g43610 (281 aa).

An N-terminal signal peptide occupies residues 1–28; that stretch reads MATQNAILKKALIIFLFTLTIMTGTAFS. One can recognise a Chitin-binding type-1 domain in the interval 29 to 66; that stretch reads QNCGTNGCKGNMCCSRWGYCGTTKAYCGTGCQSGPCNS. Disulfide bonds link C31–C42, C36–C48, C41–C55, and C59–C64. The segment at 86 to 281 is catalytic; it reads GTIASVITPA…GVTPGTNLSC (196 aa). The Proton donor role is filled by E148. N278 is a glycosylation site (N-linked (GlcNAc...) asparagine).

Belongs to the glycosyl hydrolase 19 family. Chitinase class I subfamily.

It catalyses the reaction Random endo-hydrolysis of N-acetyl-beta-D-glucosaminide (1-&gt;4)-beta-linkages in chitin and chitodextrins.. In Arabidopsis thaliana (Mouse-ear cress), this protein is Endochitinase At2g43610.